A 199-amino-acid chain; its full sequence is NAD(P)H dehydrogenase (quinone) 1 (199 aa).

The Flavodoxin-like domain occupies 4–190; sequence VLVLYYSAYG…EAARFQGAHV (187 aa). FMN is bound by residues 10 to 15 and 78 to 80; these read SAYGHI and TRY. Tyr-12 provides a ligand contact to NAD(+). Trp-98 is a binding site for substrate. Residues 113 to 119 and His-134 contribute to the FMN site; that span reads SSATQHG.

It belongs to the WrbA family. FMN serves as cofactor.

It catalyses the reaction a quinone + NADH + H(+) = a quinol + NAD(+). The enzyme catalyses a quinone + NADPH + H(+) = a quinol + NADP(+). This Rhizobium meliloti (strain 1021) (Ensifer meliloti) protein is NAD(P)H dehydrogenase (quinone) 1.